The primary structure comprises 333 residues: GTP 3',8-cyclase (333 aa).

The region spanning 7 to 221 (KFGRVHDYIR…FEACNEAGYE (215 aa)) is the Radical SAM core domain. R16 is a binding site for GTP. The [4Fe-4S] cluster site is built by C23 and C27. Y29 provides a ligand contact to S-adenosyl-L-methionine. C30 contributes to the [4Fe-4S] cluster binding site. R66 lines the GTP pocket. G70 is an S-adenosyl-L-methionine binding site. Position 97 (T97) interacts with GTP. S121 serves as a coordination point for S-adenosyl-L-methionine. K158 is a binding site for GTP. M192 is an S-adenosyl-L-methionine binding site. [4Fe-4S] cluster-binding residues include C257 and C260. Residue 262–264 (RLR) participates in GTP binding. Residue C274 participates in [4Fe-4S] cluster binding.

Belongs to the radical SAM superfamily. MoaA family. As to quaternary structure, monomer and homodimer. Requires [4Fe-4S] cluster as cofactor.

It catalyses the reaction GTP + AH2 + S-adenosyl-L-methionine = (8S)-3',8-cyclo-7,8-dihydroguanosine 5'-triphosphate + 5'-deoxyadenosine + L-methionine + A + H(+). The protein operates within cofactor biosynthesis; molybdopterin biosynthesis. In terms of biological role, catalyzes the cyclization of GTP to (8S)-3',8-cyclo-7,8-dihydroguanosine 5'-triphosphate. The chain is GTP 3',8-cyclase from Listeria monocytogenes serotype 4b (strain CLIP80459).